We begin with the raw amino-acid sequence, 73 residues long: Homeodomain-only protein (73 aa).

A DNA-binding region (homeobox; degenerate) is located at residues 3–62 (TETASGPTEDQVEILEYNFNKVNKHPDPTTLCLIAAEAGLSEEETQKWFKQRLAQWRRSE).

Interacts with serum response factor (SRF). Component of a large complex containing histone deacetylases such as HDAC2. Interacts with the acetylated forms of HSPA1A and HSPA1B. Interacts with HSPA8.

The protein localises to the nucleus. Its subcellular location is the cytoplasm. Its function is as follows. Atypical homeodomain protein which does not bind DNA and is required to modulate cardiac growth and development. Acts via its interaction with SRF, thereby modulating the expression of SRF-dependent cardiac-specific genes and cardiac development. Prevents SRF-dependent transcription either by inhibiting SRF binding to DNA or by recruiting histone deacetylase (HDAC) proteins that prevent transcription by SRF. Overexpression causes cardiac hypertrophy. Acts as a co-chaperone for HSPA1A and HSPA1B chaperone proteins and assists in chaperone-mediated protein refolding. The chain is Homeodomain-only protein (HOPX) from Bos taurus (Bovine).